Here is an 823-residue protein sequence, read N- to C-terminus: Ciliated left-right organizer ZP-N domains-containing protein (823 aa).

The N-terminal stretch at 1 to 22 is a signal peptide; the sequence is MWGSPALAWAVWLACVQPTVFP. Disordered stretches follow at residues 206-242, 269-422, 434-520, and 632-656; these read MGLY…LLPL, LVHI…DLLH, GPFL…SPSP, and LPRE…EGPG. A compositionally biased stretch (pro residues) spans 216–230; it reads TVTVQSPRQGLLQRW. The span at 389-402 shows a compositional bias: low complexity; sequence GPETPPAGVPPAAS.

The protein localises to the secreted. Plays a role in left-right patterning process. This Homo sapiens (Human) protein is Ciliated left-right organizer ZP-N domains-containing protein.